The following is a 163-amino-acid chain: E3 ubiquitin-protein ligase ATL23 (163 aa).

A helical transmembrane segment spans residues 35–55; the sequence is ALLLPCVGMCIVFLIYLFLLW. The RING-type; atypical zinc-finger motif lies at 104 to 146; that stretch reads CAVCLEDIESGQSTRLVPGCNHGFHQLCADTWLSNHTVCPVCR.

It belongs to the RING-type zinc finger family. ATL subfamily.

The protein localises to the membrane. The catalysed reaction is S-ubiquitinyl-[E2 ubiquitin-conjugating enzyme]-L-cysteine + [acceptor protein]-L-lysine = [E2 ubiquitin-conjugating enzyme]-L-cysteine + N(6)-ubiquitinyl-[acceptor protein]-L-lysine.. It participates in protein modification; protein ubiquitination. Its function is as follows. E3 ubiquitin-protein ligase able to catalyze polyubiquitination with ubiquitin-conjugating enzyme E2 UBC8, UBC10, UBC11, UBC28 and UBC29 in vitro. The chain is E3 ubiquitin-protein ligase ATL23 (ATL23) from Arabidopsis thaliana (Mouse-ear cress).